The primary structure comprises 137 residues: MAKKTQKRMPRRREEFTYRGYSVADLQQMALSELLPLMPARARRKFDRGLSREHEKLLADLRSGDENIRTHLRDMIIMPEMVGRSIEIHNGKEFQKVEIQPEAVFHYLGEFALTRRRVAHGSAGIGATRSSKYVPLK.

Belongs to the universal ribosomal protein uS19 family.

In terms of biological role, protein S19 forms a complex with S13 that binds strongly to the 16S ribosomal RNA. This chain is Small ribosomal subunit protein uS19, found in Methanoculleus marisnigri (strain ATCC 35101 / DSM 1498 / JR1).